The chain runs to 910 residues: Importin subunit beta-2 (910 aa).

19 HEAT repeats span residues Val-12–Glu-39, Ile-44–Leu-82, Tyr-93–Ile-126, Val-132–Asp-169, Asp-177–Leu-207, Phe-220–Leu-247, Gly-259–Ala-286, Asp-302–Phe-406, Ile-414–Ala-442, Pro-454–Arg-481, Phe-499–Ala-532, Leu-540–Val-573, Arg-581–Arg-619, Ala-627–Ser-677, Leu-690–Phe-721, Asp-729–Gly-764, Lys-772–Pro-807, Glu-815–Asn-848, and Pro-857–Phe-888. In terms of domain architecture, Importin N-terminal spans Ala-34–Ser-122. Positions Asp-333–Asp-381 are disordered. A compositionally biased stretch (polar residues) spans Ile-349 to Asn-364. Positions Asp-366–Asp-381 are enriched in acidic residues.

Belongs to the importin beta family. Importin beta-2 subfamily. Interacts with Ran; interacts specifically with the GTP-bound form of Ran (GTP-Ran), protecting it from GTP hydrolysis and nucleotide exchange. Interacts with nucleoporins.

It is found in the cytoplasm. The protein resides in the nucleus envelope. Its function is as follows. Functions in nuclear protein import as nuclear transport receptor. Serves as receptor for arginine/glycine-rich nuclear localization signals (rg-NLS) and PY-NLS in cargo substrates. Its predominant cargo substrate seems to be mRNA-binding proteins. Mediates docking of the importin/substrate complex to the nuclear pore complex (NPC) through binding to repeat-containing nucleoporins. The complex is subsequently translocated through the pore by an energy requiring, Ran-dependent mechanism. At the nucleoplasmic side of the NPC, GTP-Ran binding leads to release of the cargo. The importin is re-exported from the nucleus to the cytoplasm where GTP hydrolysis releases Ran from importin. The directionality of nuclear import is thought to be conferred by an asymmetric distribution of the GTP- and GDP-bound forms of Ran between the cytoplasm and nucleus. This chain is Importin subunit beta-2, found in Schizosaccharomyces pombe (strain 972 / ATCC 24843) (Fission yeast).